Here is a 415-residue protein sequence, read N- to C-terminus: Actin-like protein 7B (415 aa).

Residues 1–31 (MATRNSPMPLGTAQGDPGEAGTRPGPDASLR) form a disordered region. Ser6 is subject to Phosphoserine.

The protein belongs to the actin family. Detected only in the testis and, to a lesser extent, in the prostate.

Its subcellular location is the cytoplasm. The protein localises to the cytoskeleton. In Homo sapiens (Human), this protein is Actin-like protein 7B (ACTL7B).